We begin with the raw amino-acid sequence, 96 residues long: Protein RnfH (96 aa).

This sequence belongs to the UPF0125 (RnfH) family.

The chain is Protein RnfH from Hahella chejuensis (strain KCTC 2396).